The chain runs to 91 residues: Sec-independent protein translocase protein TatA (91 aa).

The chain crosses the membrane as a helical span at residues 2–22 (ANLGFPELVLIAVVILVLFGW). Basic and acidic residues predominate over residues 43-55 (VSEMKNDGAEAEK). The interval 43–91 (VSEMKNDGAEAEKTSAASTKTDEITSVSSTDTPQPTVTVESKDEKKHPA) is disordered. Residues 57 to 81 (SAASTKTDEITSVSSTDTPQPTVTV) are compositionally biased toward polar residues. Positions 82–91 (ESKDEKKHPA) are enriched in basic and acidic residues.

Belongs to the TatA/E family. In terms of assembly, the Tat system comprises two distinct complexes: a TatABC complex, containing multiple copies of TatA, TatB and TatC subunits, and a separate TatA complex, containing only TatA subunits. Substrates initially bind to the TatABC complex, which probably triggers association of the separate TatA complex to form the active translocon.

The protein resides in the cell membrane. Its function is as follows. Part of the twin-arginine translocation (Tat) system that transports large folded proteins containing a characteristic twin-arginine motif in their signal peptide across membranes. TatA could form the protein-conducting channel of the Tat system. This chain is Sec-independent protein translocase protein TatA, found in Corynebacterium kroppenstedtii (strain DSM 44385 / JCM 11950 / CIP 105744 / CCUG 35717).